The primary structure comprises 291 residues: Protease HtpX homolog (291 aa).

The next 2 membrane-spanning stretches (helical) occupy residues 11–31 and 34–54; these read INTF…GLLA and FLGM…ACVQ. H140 is a binding site for Zn(2+). E141 is a catalytic residue. H144 is a Zn(2+) binding site. The next 2 helical transmembrane spans lie at 155–175 and 186–206; these read IVFG…RALI and AFSF…AMLV. Residue E215 coordinates Zn(2+).

This sequence belongs to the peptidase M48B family. Requires Zn(2+) as cofactor.

It localises to the cell membrane. This Tropheryma whipplei (strain TW08/27) (Whipple's bacillus) protein is Protease HtpX homolog.